The primary structure comprises 119 residues: Protein phosphatase EYA4 (119 aa).

The protein belongs to the HAD-like hydrolase superfamily. EYA family. Mg(2+) is required as a cofactor.

The protein localises to the cytoplasm. The protein resides in the nucleus. The catalysed reaction is O-phospho-L-tyrosyl-[protein] + H2O = L-tyrosyl-[protein] + phosphate. In terms of biological role, tyrosine phosphatase that specifically dephosphorylates 'Tyr-142' of histone H2AX (H2AXY142ph). 'Tyr-142' phosphorylation of histone H2AX plays a central role in DNA repair and acts as a mark that distinguishes between apoptotic and repair responses to genotoxic stress. Promotes efficient DNA repair by dephosphorylating H2AX, promoting the recruitment of DNA repair complexes containing MDC1. Its function as histone phosphatase probably explains its role in transcription regulation during organogenesis. May be involved in development of the eye. This Gallus gallus (Chicken) protein is Protein phosphatase EYA4 (EYA4).